We begin with the raw amino-acid sequence, 227 residues long: Probable methylthioribulose-1-phosphate dehydratase (227 aa).

Substrate is bound at residue C87. Zn(2+) is bound by residues H105 and H107. The active-site Proton donor/acceptor is E129. Residue H185 coordinates Zn(2+).

Belongs to the aldolase class II family. MtnB subfamily. Zn(2+) serves as cofactor.

It localises to the cytoplasm. The enzyme catalyses 5-(methylsulfanyl)-D-ribulose 1-phosphate = 5-methylsulfanyl-2,3-dioxopentyl phosphate + H2O. The protein operates within amino-acid biosynthesis; L-methionine biosynthesis via salvage pathway; L-methionine from S-methyl-5-thio-alpha-D-ribose 1-phosphate: step 2/6. In terms of biological role, catalyzes the dehydration of methylthioribulose-1-phosphate (MTRu-1-P) into 2,3-diketo-5-methylthiopentyl-1-phosphate (DK-MTP-1-P). This is Probable methylthioribulose-1-phosphate dehydratase from Drosophila mojavensis (Fruit fly).